A 266-amino-acid polypeptide reads, in one-letter code: GTP cyclohydrolase III (266 aa).

This sequence belongs to the archaeal-type GTP cyclohydrolase family.

It catalyses the reaction GTP + 3 H2O = 2-amino-5-formylamino-6-(5-phospho-D-ribosylamino)pyrimidin-4(3H)-one + 2 phosphate + 2 H(+). Catalyzes the formation of 2-amino-5-formylamino-6-ribofuranosylamino-4(3H)-pyrimidinone ribonucleotide monophosphate and inorganic phosphate from GTP. Also has an independent pyrophosphate phosphohydrolase activity. The protein is GTP cyclohydrolase III of Methanococcus vannielii (strain ATCC 35089 / DSM 1224 / JCM 13029 / OCM 148 / SB).